The chain runs to 433 residues: tRNA-2-methylthio-N(6)-dimethylallyladenosine synthase (433 aa).

The MTTase N-terminal domain maps to 4-119; sequence KKLFIQTLGC…ITQAIKTPKF (116 aa). Cysteine 13, cysteine 50, cysteine 82, cysteine 151, cysteine 155, and cysteine 158 together coordinate [4Fe-4S] cluster. One can recognise a Radical SAM core domain in the interval 137–370; the sequence is RNSIYKSYIN…QNRHSEILDK (234 aa). Positions 373–433 constitute a TRAM domain; sequence KKQENKTFKV…KRMVLYGEIV (61 aa).

The protein belongs to the methylthiotransferase family. MiaB subfamily. Monomer. [4Fe-4S] cluster serves as cofactor.

The protein resides in the cytoplasm. The catalysed reaction is N(6)-dimethylallyladenosine(37) in tRNA + (sulfur carrier)-SH + AH2 + 2 S-adenosyl-L-methionine = 2-methylsulfanyl-N(6)-dimethylallyladenosine(37) in tRNA + (sulfur carrier)-H + 5'-deoxyadenosine + L-methionine + A + S-adenosyl-L-homocysteine + 2 H(+). In terms of biological role, catalyzes the methylthiolation of N6-(dimethylallyl)adenosine (i(6)A), leading to the formation of 2-methylthio-N6-(dimethylallyl)adenosine (ms(2)i(6)A) at position 37 in tRNAs that read codons beginning with uridine. The protein is tRNA-2-methylthio-N(6)-dimethylallyladenosine synthase of Campylobacter jejuni subsp. jejuni serotype O:2 (strain ATCC 700819 / NCTC 11168).